The chain runs to 559 residues: Formate--tetrahydrofolate ligase (559 aa).

68-75 (TPAGEGKS) serves as a coordination point for ATP.

Belongs to the formate--tetrahydrofolate ligase family.

The catalysed reaction is (6S)-5,6,7,8-tetrahydrofolate + formate + ATP = (6R)-10-formyltetrahydrofolate + ADP + phosphate. It participates in one-carbon metabolism; tetrahydrofolate interconversion. This is Formate--tetrahydrofolate ligase from Clostridium tetani (strain Massachusetts / E88).